The following is a 297-amino-acid chain: Acetylglutamate kinase (297 aa).

Residues 68-69 (GG), Arg90, and Asn195 contribute to the substrate site.

This sequence belongs to the acetylglutamate kinase family. ArgB subfamily.

It localises to the cytoplasm. It catalyses the reaction N-acetyl-L-glutamate + ATP = N-acetyl-L-glutamyl 5-phosphate + ADP. It functions in the pathway amino-acid biosynthesis; L-arginine biosynthesis; N(2)-acetyl-L-ornithine from L-glutamate: step 2/4. In terms of biological role, catalyzes the ATP-dependent phosphorylation of N-acetyl-L-glutamate. The polypeptide is Acetylglutamate kinase (Chelativorans sp. (strain BNC1)).